The following is a 920-amino-acid chain: Phosphoenolpyruvate carboxylase (920 aa).

Residues His-138 and Lys-583 contribute to the active site.

It belongs to the PEPCase type 1 family. The cofactor is Mg(2+).

It carries out the reaction oxaloacetate + phosphate = phosphoenolpyruvate + hydrogencarbonate. Its function is as follows. Forms oxaloacetate, a four-carbon dicarboxylic acid source for the tricarboxylic acid cycle. The sequence is that of Phosphoenolpyruvate carboxylase from Streptococcus pyogenes serotype M1.